The chain runs to 946 residues: Protein translocase subunit SecA (946 aa).

ATP is bound by residues Gln87, 105-109, and Asp524; that span reads GEGKT. The tract at residues 905-926 is disordered; that stretch reads APASDAAQRDPKNPASWGKIGR. Zn(2+)-binding residues include Cys930, Cys932, Cys941, and His942.

This sequence belongs to the SecA family. As to quaternary structure, monomer and homodimer. Part of the essential Sec protein translocation apparatus which comprises SecA, SecYEG and auxiliary proteins SecDF-YajC and YidC. It depends on Zn(2+) as a cofactor.

Its subcellular location is the cell inner membrane. It is found in the cytoplasm. The enzyme catalyses ATP + H2O + cellular proteinSide 1 = ADP + phosphate + cellular proteinSide 2.. Part of the Sec protein translocase complex. Interacts with the SecYEG preprotein conducting channel. Has a central role in coupling the hydrolysis of ATP to the transfer of proteins into and across the cell membrane, serving both as a receptor for the preprotein-SecB complex and as an ATP-driven molecular motor driving the stepwise translocation of polypeptide chains across the membrane. The sequence is that of Protein translocase subunit SecA from Bradyrhizobium diazoefficiens (strain JCM 10833 / BCRC 13528 / IAM 13628 / NBRC 14792 / USDA 110).